Here is a 365-residue protein sequence, read N- to C-terminus: Serine protease 40 (365 aa).

An N-terminal signal peptide occupies residues 1–34; that stretch reads MCGIRAKKSGLGGYGAGLLAALLGVSFLSQHAQT. Asn44 is a glycosylation site (N-linked (GlcNAc...) asparagine). One can recognise a Peptidase S1 domain in the interval 69–313; that stretch reads IYGGQIAGAE…FDKWIKDNKK (245 aa). The cysteines at positions 94 and 110 are disulfide-linked. Residues His109 and Asp159 each act as charge relay system in the active site. 3 disulfide bridges follow: Cys193-Cys270, Cys226-Cys249, and Cys260-Cys288. Ser264 (charge relay system) is an active-site residue. The tract at residues 312–343 is disordered; it reads KKSSSNSKPGESPHHPGSPENENPEGDNKNQG.

The protein belongs to the peptidase S1 family. As to expression, expressed in testis. More specifically, abundantly expressed in the haploid round spermatid.

The protein resides in the cytoplasmic vesicle. Its subcellular location is the secretory vesicle. The protein localises to the acrosome. It is found in the secreted. In terms of biological role, may play an important role in the sperm/egg interaction; released during the acrosome reaction. The protein is Serine protease 40 (Prss40) of Mus musculus (Mouse).